A 142-amino-acid polypeptide reads, in one-letter code: Large ribosomal subunit protein uL16 (142 aa).

Over residues 1–14 the composition is skewed to basic residues; that stretch reads MLSPRRTKFRKQQR. Positions 1–22 are disordered; that stretch reads MLSPRRTKFRKQQRGRMTGKAT.

Belongs to the universal ribosomal protein uL16 family. Part of the 50S ribosomal subunit.

In terms of biological role, binds 23S rRNA and is also seen to make contacts with the A and possibly P site tRNAs. The chain is Large ribosomal subunit protein uL16 from Synechococcus elongatus (strain ATCC 33912 / PCC 7942 / FACHB-805) (Anacystis nidulans R2).